The primary structure comprises 198 residues: NADH-quinone oxidoreductase subunit B (198 aa).

[4Fe-4S] cluster-binding residues include Cys62, Cys63, Cys128, and Cys158.

This sequence belongs to the complex I 20 kDa subunit family. NDH-1 is composed of 14 different subunits. Subunits NuoB, C, D, E, F, and G constitute the peripheral sector of the complex. It depends on [4Fe-4S] cluster as a cofactor.

It localises to the cell inner membrane. The catalysed reaction is a quinone + NADH + 5 H(+)(in) = a quinol + NAD(+) + 4 H(+)(out). Functionally, NDH-1 shuttles electrons from NADH, via FMN and iron-sulfur (Fe-S) centers, to quinones in the respiratory chain. The immediate electron acceptor for the enzyme in this species is believed to be a menaquinone. Couples the redox reaction to proton translocation (for every two electrons transferred, four hydrogen ions are translocated across the cytoplasmic membrane), and thus conserves the redox energy in a proton gradient. In Phocaeicola vulgatus (strain ATCC 8482 / DSM 1447 / JCM 5826 / CCUG 4940 / NBRC 14291 / NCTC 11154) (Bacteroides vulgatus), this protein is NADH-quinone oxidoreductase subunit B.